A 473-amino-acid polypeptide reads, in one-letter code: Aspartyl/glutamyl-tRNA(Asn/Gln) amidotransferase subunit B (473 aa).

It belongs to the GatB/GatE family. GatB subfamily. Heterotrimer of A, B and C subunits.

It catalyses the reaction L-glutamyl-tRNA(Gln) + L-glutamine + ATP + H2O = L-glutaminyl-tRNA(Gln) + L-glutamate + ADP + phosphate + H(+). The catalysed reaction is L-aspartyl-tRNA(Asn) + L-glutamine + ATP + H2O = L-asparaginyl-tRNA(Asn) + L-glutamate + ADP + phosphate + 2 H(+). Functionally, allows the formation of correctly charged Asn-tRNA(Asn) or Gln-tRNA(Gln) through the transamidation of misacylated Asp-tRNA(Asn) or Glu-tRNA(Gln) in organisms which lack either or both of asparaginyl-tRNA or glutaminyl-tRNA synthetases. The reaction takes place in the presence of glutamine and ATP through an activated phospho-Asp-tRNA(Asn) or phospho-Glu-tRNA(Gln). The sequence is that of Aspartyl/glutamyl-tRNA(Asn/Gln) amidotransferase subunit B from Mycoplasmopsis synoviae (strain 53) (Mycoplasma synoviae).